The sequence spans 251 residues: MIGKTITNFSPLTEGILLKRYKRFLADVELDTGEVVTAHCANTGPMKGVLHVGGRVRLRHSPSPSRKLSWSWEQAQVPSGQSFSWVGVNTALPNKLVRLAIEAGCLKQELGEIFEIKNEVTYGVARKSRIDLLLTPHFNNSDSRKIFVEIKNTTWAKGSTAVFPDTVTTRGQKHLQEMINEVPSSRAVLVPCISRNDIEVFVPGDSADAKYGDLFRLALNAGVEVIPCAFDFHLDCITWEGTKPFLKGENF.

It belongs to the SfsA family.

In Prochlorococcus marinus (strain SARG / CCMP1375 / SS120), this protein is Sugar fermentation stimulation protein homolog.